Reading from the N-terminus, the 238-residue chain is Probable transcriptional regulatory protein llmg_0242 (238 aa).

The protein belongs to the TACO1 family. YeeN subfamily.

Its subcellular location is the cytoplasm. The chain is Probable transcriptional regulatory protein llmg_0242 from Lactococcus lactis subsp. cremoris (strain MG1363).